We begin with the raw amino-acid sequence, 671 residues long: MDRNAAERRIAELRAEIRRHDHLYYVLDRPELTDAEYDALYRELLKLEEEHPELVTPDSPSRRVGGAPLEKFKQVTHRIPMLSLENAFTDGDIAEFDARVKRALALPAGEEIAYVCEPKLDGLAVELVYEYGTLTVGSTRGDGVVGENVTQNLKTVKSIPLRLEGENPPELLEVRGEVFLPLAAFQRLNAQREEEGEPPFANPRNAAAGSLRQLDSRITARRPLTMFCYAPGEIRGADFGSQGEFLSALRQRGLPVTSLARQVTGVAGVLAYYREMTEKRDTLPYEIDGVVVKVDSFPLQRELGEKSRSPRWAVAVKFPPRQAVTVIEDIVPSVGRTGVITPTANLRPVEVSGVTVSRATLHNWEEMERKDIRIGDTVVIERAGDVIPAVVKVLTEKRSGSERFLPIPAACPECGSEVVKIPDEVAVRCMGLSCPAQIRESIIHFASRNAMDMEGLGEKYIEQLLRLGLVGNVADLYTLTRDDFMKFDRMGEKLAENLLNAIEASKKRELSRFIFALGIRHVGEHTAKLLATAFGSIDNLARATEAELLSIREIGPQVAQSITTFFHNEGNRETIRRMVEAGVEPTVEEKKVGGKFTGKTFVFTGTLIRFSRSEAQKMVESEGGHAAGSVSKKTDYVVAGDEAGSKLDKARQLGVTVLAEDEFLQMLEGEQ.

Residues 34-38, 83-84, and E117 contribute to the NAD(+) site; these read DAEYD and SL. K119 functions as the N6-AMP-lysine intermediate in the catalytic mechanism. Residues R140, E177, K293, and K317 each coordinate NAD(+). 4 residues coordinate Zn(2+): C411, C414, C429, and C434. A BRCT domain is found at 591-671; it reads KVGGKFTGKT…EFLQMLEGEQ (81 aa).

It belongs to the NAD-dependent DNA ligase family. LigA subfamily. Mg(2+) is required as a cofactor. Mn(2+) serves as cofactor.

It catalyses the reaction NAD(+) + (deoxyribonucleotide)n-3'-hydroxyl + 5'-phospho-(deoxyribonucleotide)m = (deoxyribonucleotide)n+m + AMP + beta-nicotinamide D-nucleotide.. Functionally, DNA ligase that catalyzes the formation of phosphodiester linkages between 5'-phosphoryl and 3'-hydroxyl groups in double-stranded DNA using NAD as a coenzyme and as the energy source for the reaction. It is essential for DNA replication and repair of damaged DNA. The sequence is that of DNA ligase from Geobacter metallireducens (strain ATCC 53774 / DSM 7210 / GS-15).